Here is a 798-residue protein sequence, read N- to C-terminus: Copalyl diphosphate synthase 1, chloroplastic (798 aa).

A chloroplast-targeting transit peptide spans 1 to 72 (MASLSTMHLI…SKVAGINRVA (72 aa)). K251 contributes to the substrate binding site. D383 and D385 together coordinate Mg(2+). The DXDD motif signature appears at 383–386 (DIDD). K469 lines the substrate pocket.

Belongs to the terpene synthase family. Tpsc subfamily. It depends on Mg(2+) as a cofactor. In terms of tissue distribution, highly expressed in roots, and, at low levels, in stems and leaves.

The protein resides in the plastid. The protein localises to the chloroplast. It carries out the reaction (2E,6E,10E)-geranylgeranyl diphosphate = (+)-copalyl diphosphate. It participates in secondary metabolite biosynthesis; terpenoid biosynthesis. In terms of biological role, involved in the biosynthesis of ent-kaurene diterpenoids natural products such as oridonin, miltiradiene, eriocalyxin B and nezukol, known to exhibit antitumor, anti-inflammatory and antibacterial activities. Catalyzes the conversion of (2E,6E,10E)-geranylgeranyl diphosphate (GGPP) to (+)-copalyl diphosphate ((+)-CPP). This Isodon rubescens (Rabdosia rubescens) protein is Copalyl diphosphate synthase 1, chloroplastic.